The primary structure comprises 1708 residues: MEAQQFIKAPGITTAIEQAALAAANSALANAVVVRPFLSRVQTEILINLMQPRQLVFRPEVLWNHPIQRVIHNELEQYCRARAGRCLEVGAHPRSINDNPNVLHRCFLRPVGRDVQRWYSAPTRGPAANCRRSALRGLPPVDRTYCFDGFSRCAFAAETGVALYSLHDLWPADVAEAMARHGMTRLYAALHLPPEVLLPPGTYHTTSYLLIHDGDRAVVTYEGDTSAGYNHDVSILRAWIRTTKIVGDHPLVIERVRAIGCHFVLLLTAAPEPSPMPYVPYPRSTEVYVRSIFGPGGSPSLFPSACSTKSTFHAVPVHIWDRLMLFGATLDDQAFCCSRLMTYLRGISYKVTVGALVANEGWNASEDALTAVITAAYLTICHQRYLRTQAISKGMRRLEVEHAQKFITRLYSWLFEKSGRDYIPGRQLQFYAQCRRWLSAGFHLDPRVLVFDESVPCRCRTFLKKVAGKFCCFMRWLGQECTCFLEPAEGLVGDYGHDNEAYEGSEVDPAEPAHLDVSGTYAVHGRQLEALYRALNVPHDIAARASRLTATVELTASPDRLECRTVLGNKTFRTTVVDGAHLEANGPEQYVLSFDASRQSMGAGSHSLTYELTPAGLQVRISSNGLDCTATFPPGGAPSAAPGEVAAFCSALYRYNRFTQRHSLTGGLWLHPEGLLGIFPPFSPGHIWESANPFCGEGTLYTRTWSTSGFSSDFSPPEAAAPVLAAAPGLPHPTPPVSDIWVLPPPSEESQVDAASVPPAPEPAGLPSSIVLTLPPPLPPVRKPPTPPPSRTRRLLYTYPDGAKVYAGSLFESDCNWLVNASNPGHRPGGGLCHAFYQRFPEAFYPTEFIMREGLAAYTLTPRPIIHAVAPDYRVEQNPKRLEAAYRETCSRRGTAAYPLLGSGIYQVPVSLSFDAWERNHRPGDELYLTEPAAAWFEANKPAQPALTITEDTARTANLALEIDAATDVGRACAGCTISPGIVHYQFTAGVPGSGKSRSIQQGDVDVVVVPTRELRNSWRRRGFAAFTPHTAARVTIGRRVVIDEAPSLPPHLLLLHMQRASSVHLLGDPNQIPAIDFEHAGLVPAIRPELAPTSWWHVTHRCPADVCELIRGAYPKIQTTSRVLRSLFWNEPAIGQKLVFTQAAKAANPGAITVHEAQGATFTETTIIATADARGLIQSSRAHAIVALTRHTEKCVILDAPGLLREVGISDVIVNNFFLAGGEVGHHRPSVIPRGNPDQNLGTLQAFPPSCQISAYHQLAEELGHRPAPVAAVLPPCPELEQGLLYMPQELTVSDSVLVFELTDIVHCRMAAPSQRKAVLSTLVGRYGRRTKLYEAAHSDVRESLARFIPTIGPVQATTCELYELVEAMVEKGQDGSAVLELDLCNRDVSRITFFQKDCNKFTTGETIAHGKVGQGISAWSKTFCALFGPWFRAIEKEILALLPPNIFYGDAYEESVFAAAVSGAGSCMVFENDFSEFDSTQNNFSLGLECVVMEECGMPQWLIRLYHLVRSAWILQAPKESLKGFWKKHSGEPGTLLWNTVWNMAIIAHCYEFRDFRVAAFKGDDSVVLCSDYRQSRNAAALIAGCGLKLKVDYRPIGLYAGVVVAPGLGTLPDVVRFAGRLSEKNWGPGPERAEQLRLAVCDFLRGLTNVAQVCVDVVSRVYGVSPGLVHNLIGMLQTIADGKAHFTETIKPVLDLTNSIIQRVE.

Positions 56–240 (VFRPEVLWNH…HDVSILRAWI (185 aa)) constitute an Alphavirus-like MT domain. The segment at 60-240 (EVLWNHPIQR…HDVSILRAWI (181 aa)) is methyltransferase. Residues 241–439 (RTTKIVGDHP…FYAQCRRWLS (199 aa)) form a Y-domain region. Cysteines 434 and 481 form a disulfide. The interval 442–509 (FHLDPRVLVF…EAYEGSEVDP (68 aa)) is putative protease. Residues 510-691 (AEPAHLDVSG…FSPGHIWESA (182 aa)) are zinc-binding. Zn(2+) contacts are provided by His-671, Glu-673, and His-686. The interval 714 to 793 (FSPPEAAAPV…PPTPPPSRTR (80 aa)) is hinge. The 147-residue stretch at 790–936 (SRTRRLLYTY…LYLTEPAAAW (147 aa)) folds into the Macro domain. Residues 800 to 957 (PDGAKVYAGS…TITEDTARTA (158 aa)) form an X-domain region. One can recognise a (+)RNA virus helicase ATP-binding domain in the interval 949–1097 (ITEDTARTAN…RPELAPTSWW (149 aa)). Positions 975 to 1219 (GCTISPGIVH…ISDVIVNNFF (245 aa)) are NTPase/helicase. 990 to 997 (GVPGSGKS) is a binding site for ATP. The (+)RNA virus helicase C-terminal domain occupies 1098-1231 (HVTHRCPADV…GGEVGHHRPS (134 aa)). The tract at residues 1222–1708 (GGEVGHHRPS…LTNSIIQRVE (487 aa)) is RNA-directed RNA polymerase. Residues 1469–1580 (CMVFENDFSE…LCSDYRQSRN (112 aa)) enclose the RdRp catalytic domain.

This sequence belongs to the hepevirus non-structural polyprotein family. In terms of assembly, the protease domain interacts with host EIF2AK4 (via C-terminus); this interaction inhibits dimerization of EIF2AK4 and prevents EIF2AK4-mediated phosphorylation of host EIF2A. Mg(2+) is required as a cofactor. In terms of processing, ORF1 polyprotein does not seem to be processed into distinct enzymatic domains by a viral protease belonging to ORF1, but could be processed by a host serine protease like thrombin.

Its subcellular location is the host cytoplasm. It is found in the host perinuclear region. The enzyme catalyses RNA(n) + a ribonucleoside 5'-triphosphate = RNA(n+1) + diphosphate. The catalysed reaction is GTP + S-adenosyl-L-methionine = N(7)-methyl-GTP + S-adenosyl-L-homocysteine. Putative protease: Inhibited by chymostatin. Its function is as follows. Methyltransferase: Displays a capping enzyme activity. This function is necessary since all viral RNAs are synthesized in the cytoplasm, and host capping enzymes are restricted to the nucleus. The enzymatic reaction involves a covalent link between 7-methyl-GMP and the methyltransferase, whereas eukaryotic capping enzymes form a covalent complex only with GMP. Methyltransferase catalyzes transfer of a methyl group from S-adenosylmethionine to GTP and GDP to yield m(7)GTP or m(7)GDP. GDP is a better substrate than GTP. This enzyme also displays guanylyltransferase activity to form a covalent complex, methyltransferase-m(7)GMP, from which 7-methyl-GMP is transferred to the mRNA to create the cap structure. Y-domain: Indispensable for virus replication. Functionally, putative protease: The putative protease domain although necessary for replication of the virus may not be a protease but rather a structural Zn(2+)-binding domain. Inhibits induction of IFN-beta by MDA5 and RIG-I pathways and down-regulates the expression of MDA5. In terms of biological role, NTPase/helicase: Multi-functional protein that exhibits NTPase and RNA unwinding activities. Hydrolyzes all NTPs efficiently and unwinds RNA duplexes containing 5' overhangs. Possesses a sequence independent RNA-5'-triphosphatase (RTPase) activity suggestive of its role in forming viral cap structure. Also participates in viral genome replication, RNA translocation and genome packaging/unpackaging. Its function is as follows. RNA-directed RNA polymerase: Plays an essential role in the virus replication. Binds to the 3'-end of the genomic RNA to initiate viral replication. This Bandicota bengalensis (lesser bandicoot rat) protein is Non-structural polyprotein pORF1.